Here is an 854-residue protein sequence, read N- to C-terminus: MSLSEEQARSFLDQNPDFARQYFGKKLSPENVAAACEDGCPPDCDSLRDLCQVEESTALLELVQDMQESINMERVVFKVLRRLCTLLQADRCSLFMYRQRNGVAELATRLFSVQPDSVLEDCLVPPDSEIVFPLDIGVVGHVAQTKKMVNVEDVAECPHFSSFADELTDYKTKNMLATPIMNGKDVVAVIMAVNKLNGPFFTSEDEDVFLKYLNFATLYLKIYHLSYLHNCETRRGQVLLWSANKVFEELTDIERQFHKAFYTVRAYLNCERYSVGLLDMTKEKEFFDVWSVLMGESQPYSGPRTPDGREIVFYKVIDYVLHGKEEIKVIPTPSADHWALASGLPSYVAESGFICNIMNASADEMFKFQEGALDDSGWLIKNVLSMPIVNKKEEIVGVATFYNRKDGKPFDEQDEVLMESLTQFLGWSVMNTDTYDKMNKLENRKDIAQDMVLYHVKCDRDEIQLILPTRARLGKEPADCDEDELGEILKEELPGPTTFDIYEFHFSDLECTELDLVKCGIQMYYELGVVRKFQIPQEVLVRFLFSISKGYRRITYHNWRHGFNVAQTMFTLLMTGKLKSYYTDLEAFAMVTAGLCHDIDHRGTNNLYQMKSQNPLAKLHGSSILERHHLEFGKFLLSEETLNIYQNLNRRQHEHVIHLMDIAIIATDLALYFKKRAMFQKIVDESKNYQDKKSWVEYLSLETTRKEIVMAMMMTACDLSAITKPWEVQSKVALLVAAEFWEQGDLERTVLDQQPIPMMDRNKAAELPKLQVGFIDFVCTFVYKEFSRFHEEILPMFDRLQNNRKEWKALADEYEAKVKALEEKEEEERVAAKKVGTEICNGGPAPKSSTCCIL.

Position 2 is an N-acetylserine (serine 2). 2 consecutive GAF domains span residues 71–220 and 252–429; these read NMER…TLYL and DIER…GWSV. The 334-residue stretch at 481–814 folds into the PDEase domain; that stretch reads DEDELGEILK…KEWKALADEY (334 aa). Histidine 557 (proton donor) is an active-site residue. A divalent metal cation-binding residues include histidine 561, histidine 597, aspartate 598, and aspartate 718. Cysteine 851 carries S-geranylgeranyl cysteine lipidation. The propeptide at 852 to 854 is removed in mature form; the sequence is CIL.

It belongs to the cyclic nucleotide phosphodiesterase family. As to quaternary structure, oligomer composed of two catalytic chains (alpha and beta), an inhibitory chain (gamma) and the delta chain. A divalent metal cation serves as cofactor.

Its subcellular location is the membrane. The protein localises to the cell projection. It is found in the cilium. It localises to the photoreceptor outer segment. The catalysed reaction is 3',5'-cyclic GMP + H2O = GMP + H(+). Its function is as follows. Rod-specific cGMP phosphodiesterase that catalyzes the hydrolysis of 3',5'-cyclic GMP. Necessary for the formation of a functional phosphodiesterase holoenzyme. Involved in retinal circadian rhythm photoentrainment via modulation of UVA and orange light-induced phase-shift of the retina clock. May participate in processes of transmission and amplification of the visual signal. This chain is Rod cGMP-specific 3',5'-cyclic phosphodiesterase subunit beta, found in Homo sapiens (Human).